Reading from the N-terminus, the 428-residue chain is MLQVREPSEHDIVTLMAELGRRGRAAARPLAVASTERKNAALLAMAEALEANTGRILAANKTDMEKGEAAGLSAAILDRLKLDEKRVRAIAEGIRAIADLDDPVGTVIAEWDRPNGLHIERVRTPLGVIGVIYESRPNVTADAGALCLKAGNAVILRGGSDSAASSAAIHSCLVEGLRKAGLPEDAIQRVPVTDREAVGEMLRGLGGNLDVIVPRGGRSLVERVQNEARVPVFAHLEGICHLYVDRSAKLDMAVALALNAKMRRTGVCGAAETLLVDRAVAGTHLVPILEALAAAGCEIRGGEDVRARFPSAISASEEDWRTEYLDAIISVKLVDGVFEAIEHIGTYSSHHTEAIVAEDPVAVQRFLNEIDSAILLHNASTQFADGGEFGMGAEIGIATGKMHARGPVGVEQLTSFKYRVHGSGQTRP.

It belongs to the gamma-glutamyl phosphate reductase family.

The protein resides in the cytoplasm. It catalyses the reaction L-glutamate 5-semialdehyde + phosphate + NADP(+) = L-glutamyl 5-phosphate + NADPH + H(+). Its pathway is amino-acid biosynthesis; L-proline biosynthesis; L-glutamate 5-semialdehyde from L-glutamate: step 2/2. In terms of biological role, catalyzes the NADPH-dependent reduction of L-glutamate 5-phosphate into L-glutamate 5-semialdehyde and phosphate. The product spontaneously undergoes cyclization to form 1-pyrroline-5-carboxylate. In Chelativorans sp. (strain BNC1), this protein is Gamma-glutamyl phosphate reductase.